The primary structure comprises 369 residues: GDSL esterase/lipase At5g42170 (369 aa).

The signal sequence occupies residues 1-16; that stretch reads MSRLVYVIFLLVVVEG. N-linked (GlcNAc...) asparagine glycans are attached at residues Asn28 and Asn45. Ser57 functions as the Nucleophile in the catalytic mechanism. N-linked (GlcNAc...) asparagine glycans are attached at residues Asn203 and Asn336. Active-site residues include Asp344 and His347.

This sequence belongs to the 'GDSL' lipolytic enzyme family.

It localises to the secreted. The chain is GDSL esterase/lipase At5g42170 from Arabidopsis thaliana (Mouse-ear cress).